The primary structure comprises 107 residues: Iron-binding protein IscA (107 aa).

Fe cation is bound by residues Cys35, Cys99, and Cys101.

It belongs to the HesB/IscA family. As to quaternary structure, homodimer; may form tetramers and higher multimers. The cofactor is Fe cation.

Its function is as follows. Is able to transfer iron-sulfur clusters to apo-ferredoxin. Multiple cycles of [2Fe2S] cluster formation and transfer are observed, suggesting that IscA acts catalytically. Recruits intracellular free iron so as to provide iron for the assembly of transient iron-sulfur cluster in IscU in the presence of IscS, L-cysteine and the thioredoxin reductase system TrxA/TrxB. This chain is Iron-binding protein IscA, found in Cronobacter sakazakii (strain ATCC BAA-894) (Enterobacter sakazakii).